The chain runs to 122 residues: Small ribosomal subunit protein uS13 (122 aa).

A disordered region spans residues 99–122; that stretch reads RGQRTHTNARTRKGPAKAIAGKKK.

It belongs to the universal ribosomal protein uS13 family. In terms of assembly, part of the 30S ribosomal subunit. Forms a loose heterodimer with protein S19. Forms two bridges to the 50S subunit in the 70S ribosome.

In terms of biological role, located at the top of the head of the 30S subunit, it contacts several helices of the 16S rRNA. In the 70S ribosome it contacts the 23S rRNA (bridge B1a) and protein L5 of the 50S subunit (bridge B1b), connecting the 2 subunits; these bridges are implicated in subunit movement. Contacts the tRNAs in the A and P-sites. The polypeptide is Small ribosomal subunit protein uS13 (Agrobacterium fabrum (strain C58 / ATCC 33970) (Agrobacterium tumefaciens (strain C58))).